A 985-amino-acid polypeptide reads, in one-letter code: MELNVLLLLLCLSGGQVGAVEETLMDTRTATAELGWTANPSSGWEEVSGYDENLNTIRTYQVCNVFGPKQNNWLLTTFIPRRGAHRVYVEMRFTVRDCSSLPNVPGSCKETFNLYYYETDSNIENKISTFWNESPYLKVDTIAADESFSQVDFGGRLMKVNTEVRSFGPLTRSGFYLAFQDYGACMSLLSVRVFFKEMPSVVQNLLVFPETMTGAESTSLVIARGTCIPNAEEVDVPIKLYCNGDGEWMVPIGKCTCKAGYEPENHVVCKACPAAMFKANQGMGICAQCPANSRSTSEASPICICRNGYYRADFDTPEAPCTSVPSGPRNVISIVNETAITLEWHPPRETGGRDDVDYNIVCKKCRADRRACSRCDDNVDFVPRQLGLTDTRVFISNLWAHTPYTFETQAVNGVTNKSPFPPQHVSVNITTNQAAPSSVPIMHQVKATMKSITLSWPQQEQPNGIILDYEIRYYEKDHHEFNSSLARSQTNTARRTGGRVWMFMSVQVRARTVAGYGKFSSKCGFQTLTAEDYKSELREQLPLTGSAAAGVVFIVSLVAISIVCSRKRTYSKEAVYSDKLQHYSTGRGSPGMKIYIDPFTYEDPNEAVREFAKEIDVSFVKIEEVIGAGEFGEVYKGRLKLPSKREISVAIKTLKAGYSEKQRRDFLSEASIMGQFDHPNIIRLEGVVTKSRPVMIITEFMENGALDSFLRQNDGQFTVIQLVGMLRGIAAGMKYLSEMNYVHRDLAARNILVNSNLVCKVSDFGLSRYLQDDTSDPTYTSSLGGKIPVRWTAQEAIAYRKFTSASDVWSYGIVMWEVMSYGERPYWTMSNQDVINAIEQDYRLPPPMDCPAALHQLMLDCWQKDRNSRPRLAEIVNTLRPMIRNPASLKTVATIPAVPSQPLLDRSIPDISAFTSVDDWLSAIKMGQYRDNFLSSGFTSLQLVAQMTSEDLLRIGITLAGHQKKILNSIQSMRVQITQSPTSIA.

A signal peptide spans Met1–Ala19. Residues Val20–Pro542 lie on the Extracellular side of the membrane. An Eph LBD domain is found at Glu21–Gln203. Fibronectin type-III domains lie at Val324 to Ala434 and Ala435 to Asp532. Asn336, Asn428, and Asn482 each carry an N-linked (GlcNAc...) asparagine glycan. The helical transmembrane segment at Leu543–Val563 threads the bilayer. At Cys564–Ala985 the chain is on the cytoplasmic side. Residues Val620 to Ile883 enclose the Protein kinase domain. ATP is bound by residues Ile626–Val634 and Lys652. Asp745 acts as the Proton acceptor in catalysis. The region spanning Ser912–Gln976 is the SAM domain. A PDZ-binding motif is present at residues Ser983–Ala985.

This sequence belongs to the protein kinase superfamily. Tyr protein kinase family. Ephrin receptor subfamily. In terms of assembly, heterotetramer upon binding of the ligand. The heterotetramer is composed of an ephrin dimer and a receptor dimer. Oligomerization is probably required to induce biological responses. In terms of processing, phosphorylated. Autophosphorylation is stimulated by ligands.

The protein resides in the cell membrane. Its subcellular location is the early endosome membrane. The protein localises to the cell projection. It is found in the dendrite. It carries out the reaction L-tyrosyl-[protein] + ATP = O-phospho-L-tyrosyl-[protein] + ADP + H(+). Its function is as follows. Receptor tyrosine kinase which binds promiscuously transmembrane ephrin-B family ligands residing on adjacent cells, leading to contact-dependent bidirectional signaling into neighboring cells. The signaling pathway downstream of the receptor is referred to as forward signaling while the signaling pathway downstream of the ephrin ligand is referred to as reverse signaling. May play a role in axon guidance during nervous system development. May also play an important redundant role with other ephrin-B receptors in development and maturation of dendritic spines and synapse formation. More generally, may play a role in targeted cell migration and adhesion. Upon activation by ephrin-B ligands activates the MAPK/ERK and the JNK signaling cascades to regulate cell migration and adhesion respectively. This is Ephrin type-B receptor 1-A (ephb1-a) from Xenopus laevis (African clawed frog).